A 326-amino-acid chain; its full sequence is Phospho-N-acetylmuramoyl-pentapeptide-transferase (326 aa).

A run of 10 helical transmembrane segments spans residues glycine 5–isoleucine 25, threonine 51–alanine 71, valine 82–isoleucine 102, isoleucine 122–tyrosine 142, leucine 148–serine 168, leucine 180–isoleucine 200, valine 204–alanine 224, valine 229–leucine 249, leucine 252–isoleucine 272, and valine 304–valine 324.

Belongs to the glycosyltransferase 4 family. MraY subfamily. Mg(2+) is required as a cofactor.

It is found in the cell membrane. The enzyme catalyses UDP-N-acetyl-alpha-D-muramoyl-L-alanyl-gamma-D-glutamyl-meso-2,6-diaminopimeloyl-D-alanyl-D-alanine + di-trans,octa-cis-undecaprenyl phosphate = di-trans,octa-cis-undecaprenyl diphospho-N-acetyl-alpha-D-muramoyl-L-alanyl-D-glutamyl-meso-2,6-diaminopimeloyl-D-alanyl-D-alanine + UMP. Its pathway is cell wall biogenesis; peptidoglycan biosynthesis. Functionally, catalyzes the initial step of the lipid cycle reactions in the biosynthesis of the cell wall peptidoglycan: transfers peptidoglycan precursor phospho-MurNAc-pentapeptide from UDP-MurNAc-pentapeptide onto the lipid carrier undecaprenyl phosphate, yielding undecaprenyl-pyrophosphoryl-MurNAc-pentapeptide, known as lipid I. The protein is Phospho-N-acetylmuramoyl-pentapeptide-transferase of Oceanobacillus iheyensis (strain DSM 14371 / CIP 107618 / JCM 11309 / KCTC 3954 / HTE831).